The chain runs to 353 residues: Holliday junction branch migration complex subunit RuvB (353 aa).

The segment at 4 to 185 (ADRLITAVGG…FGIVQRLEFY (182 aa)) is large ATPase domain (RuvB-L). ATP is bound by residues isoleucine 24, arginine 25, glycine 66, lysine 69, threonine 70, threonine 71, 132–134 (EDF), arginine 175, tyrosine 185, and arginine 222. A Mg(2+)-binding site is contributed by threonine 70. The tract at residues 186 to 256 (NIADLSTIVA…TADKALNLLD (71 aa)) is small ATPAse domain (RuvB-S). The head domain (RuvB-H) stretch occupies residues 259–353 (EHGFDHQDRR…GEFVDDAADL (95 aa)). Residues arginine 295, arginine 314, and arginine 319 each contribute to the DNA site.

The protein belongs to the RuvB family. In terms of assembly, homohexamer. Forms an RuvA(8)-RuvB(12)-Holliday junction (HJ) complex. HJ DNA is sandwiched between 2 RuvA tetramers; dsDNA enters through RuvA and exits via RuvB. An RuvB hexamer assembles on each DNA strand where it exits the tetramer. Each RuvB hexamer is contacted by two RuvA subunits (via domain III) on 2 adjacent RuvB subunits; this complex drives branch migration. In the full resolvosome a probable DNA-RuvA(4)-RuvB(12)-RuvC(2) complex forms which resolves the HJ.

The protein localises to the cytoplasm. The catalysed reaction is ATP + H2O = ADP + phosphate + H(+). The RuvA-RuvB-RuvC complex processes Holliday junction (HJ) DNA during genetic recombination and DNA repair, while the RuvA-RuvB complex plays an important role in the rescue of blocked DNA replication forks via replication fork reversal (RFR). RuvA specifically binds to HJ cruciform DNA, conferring on it an open structure. The RuvB hexamer acts as an ATP-dependent pump, pulling dsDNA into and through the RuvAB complex. RuvB forms 2 homohexamers on either side of HJ DNA bound by 1 or 2 RuvA tetramers; 4 subunits per hexamer contact DNA at a time. Coordinated motions by a converter formed by DNA-disengaged RuvB subunits stimulates ATP hydrolysis and nucleotide exchange. Immobilization of the converter enables RuvB to convert the ATP-contained energy into a lever motion, pulling 2 nucleotides of DNA out of the RuvA tetramer per ATP hydrolyzed, thus driving DNA branch migration. The RuvB motors rotate together with the DNA substrate, which together with the progressing nucleotide cycle form the mechanistic basis for DNA recombination by continuous HJ branch migration. Branch migration allows RuvC to scan DNA until it finds its consensus sequence, where it cleaves and resolves cruciform DNA. In Pseudomonas syringae pv. tomato (strain ATCC BAA-871 / DC3000), this protein is Holliday junction branch migration complex subunit RuvB.